The chain runs to 355 residues: 3-dehydroquinate synthase (355 aa).

NAD(+)-binding positions include Gly-105 to Asp-109, Thr-129 to Ser-130, Lys-142, Lys-151, and Thr-169 to Thr-172. Zn(2+) is bound by residues Glu-184, His-246, and His-263.

This sequence belongs to the sugar phosphate cyclases superfamily. Dehydroquinate synthase family. NAD(+) is required as a cofactor. The cofactor is Co(2+). Zn(2+) serves as cofactor.

The protein localises to the cytoplasm. The catalysed reaction is 7-phospho-2-dehydro-3-deoxy-D-arabino-heptonate = 3-dehydroquinate + phosphate. The protein operates within metabolic intermediate biosynthesis; chorismate biosynthesis; chorismate from D-erythrose 4-phosphate and phosphoenolpyruvate: step 2/7. Catalyzes the conversion of 3-deoxy-D-arabino-heptulosonate 7-phosphate (DAHP) to dehydroquinate (DHQ). The chain is 3-dehydroquinate synthase from Streptococcus agalactiae serotype III (strain NEM316).